Reading from the N-terminus, the 383-residue chain is D-aspartate oxidase 3 (383 aa).

The N-terminal stretch at 1–17 (MLYALLLLFGGVSTVSS) is a signal peptide. Lys56 and Ser63 together coordinate FAD. N-linked (GlcNAc...) asparagine glycans are attached at residues Asn152, Asn271, and Asn320. Residue Thr339 participates in FAD binding. Asn371 is a glycosylation site (N-linked (GlcNAc...) asparagine).

This sequence belongs to the DAMOX/DASOX family. Requires FAD as cofactor. As to expression, in both sexes, present in coelomocytes (at protein level). Expressed in hypodermal cells and the proximal gonadal sheath cells in adult hermaphrodites (at protein level). Also expressed in probable head mesodermal cells and unidentified cells in the head, and vulval muscles in adult hermaphrodites. Expressed in the seminal vesicle, spicule and tail cells in adult males (at protein level).

It localises to the secreted. The catalysed reaction is D-aspartate + O2 + H2O = oxaloacetate + H2O2 + NH4(+). It catalyses the reaction D-glutamate + O2 + H2O = H2O2 + 2-oxoglutarate + NH4(+). Its function is as follows. Selectively catalyzes the oxidative deamination of acidic amino acids. Plays a role in the egg-laying events and maturation processes of the reproductive organs. The protein is D-aspartate oxidase 3 (ddo-3) of Caenorhabditis elegans.